A 287-amino-acid chain; its full sequence is 4-hydroxybenzoate octaprenyltransferase (287 aa).

6 helical membrane passes run 41–61, 89–109, 133–153, 158–178, 202–224, and 266–286; these read WPLL…GCAM, WEAV…ILPL, FFAI…PMAF, DTVP…SVAY, FGRF…YVWI, and HNNW…LLAG.

The protein belongs to the UbiA prenyltransferase family. Requires Mg(2+) as cofactor.

The protein resides in the cell inner membrane. It catalyses the reaction all-trans-octaprenyl diphosphate + 4-hydroxybenzoate = 4-hydroxy-3-(all-trans-octaprenyl)benzoate + diphosphate. The protein operates within cofactor biosynthesis; ubiquinone biosynthesis. Its function is as follows. Catalyzes the prenylation of para-hydroxybenzoate (PHB) with an all-trans polyprenyl group. Mediates the second step in the final reaction sequence of ubiquinone-8 (UQ-8) biosynthesis, which is the condensation of the polyisoprenoid side chain with PHB, generating the first membrane-bound Q intermediate 3-octaprenyl-4-hydroxybenzoate. This chain is 4-hydroxybenzoate octaprenyltransferase, found in Burkholderia cenocepacia (strain HI2424).